The chain runs to 429 residues: 5-methylthioadenosine/S-adenosylhomocysteine deaminase (429 aa).

The Zn(2+) site is built by H66 and H68. Substrate is bound by residues E95, R147, R158, and H181. H208 lines the Zn(2+) pocket. Substrate contacts are provided by E211 and D296. A Zn(2+)-binding site is contributed by D296.

Belongs to the metallo-dependent hydrolases superfamily. MTA/SAH deaminase family. It depends on Zn(2+) as a cofactor.

It carries out the reaction S-adenosyl-L-homocysteine + H2O + H(+) = S-inosyl-L-homocysteine + NH4(+). The enzyme catalyses S-methyl-5'-thioadenosine + H2O + H(+) = S-methyl-5'-thioinosine + NH4(+). Catalyzes the deamination of 5-methylthioadenosine and S-adenosyl-L-homocysteine into 5-methylthioinosine and S-inosyl-L-homocysteine, respectively. Is also able to deaminate adenosine. This is 5-methylthioadenosine/S-adenosylhomocysteine deaminase from Caldicellulosiruptor saccharolyticus (strain ATCC 43494 / DSM 8903 / Tp8T 6331).